The following is a 431-amino-acid chain: MYVEIIDVRAREVLDSRGNPTVEVEVLLEDGSFGSAIVPSGASTGKFEALELRDGDKKRYMGKGVLKAVEHVNEIIAPRVVGLNAFDQVYLDKVLLELDGTENKSKLGANAILGVSMAVARAASESAGVPLYKYLGGANAKILPVPFMNVINGGAHADNSLDIQEFMLVPAGAPSFKEALRYGAEVFHTLKKILKDAGHVTAVGDEGGFAPNLSSNEEAIQVLIEAIKKAGYEPGKDIYIALDCAASEFYNEETGKYNIDGTEKTGDELIEYYSMLIDKYWPVIISIEDPFEQEDWDSYVKFTQKVGGKVQIVGDDLYVTNVKRLEKGIELFASNSILIKLNQIGSVTETLDAIEMAKTAGMTNVISHRSGETEDTFIADLAVATNAGMIKTGSLSRSERIAKYNRLLRIEEELGDAAIYKGLGAFYSIKR.

Q164 provides a ligand contact to (2R)-2-phosphoglycerate. Residue E206 is the Proton donor of the active site. Mg(2+)-binding residues include D243, E288, and D315. K340, R369, S370, and K391 together coordinate (2R)-2-phosphoglycerate. K340 functions as the Proton acceptor in the catalytic mechanism.

Belongs to the enolase family. Mg(2+) serves as cofactor.

The protein localises to the cytoplasm. It localises to the secreted. Its subcellular location is the cell surface. It carries out the reaction (2R)-2-phosphoglycerate = phosphoenolpyruvate + H2O. Its pathway is carbohydrate degradation; glycolysis; pyruvate from D-glyceraldehyde 3-phosphate: step 4/5. Functionally, catalyzes the reversible conversion of 2-phosphoglycerate (2-PG) into phosphoenolpyruvate (PEP). It is essential for the degradation of carbohydrates via glycolysis. The sequence is that of Enolase from Fervidobacterium nodosum (strain ATCC 35602 / DSM 5306 / Rt17-B1).